A 187-amino-acid chain; its full sequence is Elongation factor P (187 aa).

This sequence belongs to the elongation factor P family.

The protein resides in the cytoplasm. Its pathway is protein biosynthesis; polypeptide chain elongation. Its function is as follows. Involved in peptide bond synthesis. Stimulates efficient translation and peptide-bond synthesis on native or reconstituted 70S ribosomes in vitro. Probably functions indirectly by altering the affinity of the ribosome for aminoacyl-tRNA, thus increasing their reactivity as acceptors for peptidyl transferase. In Ruegeria sp. (strain TM1040) (Silicibacter sp.), this protein is Elongation factor P.